The following is a 281-amino-acid chain: Inhibitor of growth protein 2 (281 aa).

The stretch at Val49–Lys101 forms a coiled coil. Residues Ser123 to Val204 are disordered. Over residues Glu131–Met141 the composition is skewed to basic and acidic residues. Positions Lys182–Lys194 are enriched in basic residues. Residue Lys196 forms a Glycyl lysine isopeptide (Lys-Gly) (interchain with G-Cter in SUMO1) linkage. The segment at Pro213–Asp262 adopts a PHD-type zinc-finger fold. Residues Cys216, Cys218, Cys229, Cys234, His240, Cys243, Cys256, and Cys259 each contribute to the Zn(2+) site. Basic and acidic residues predominate over residues Gly261–Lys275. Residues Gly261 to Arg281 are disordered. Residues Lys265–Arg281 form a PBR region.

The protein belongs to the ING family. In terms of assembly, interacts with H3K4me3 and to a lesser extent with H3K4me2. Component of a mSin3A-like complex at least consisting of SIN3A, HDAC1, HDAC2, RBBP4/RbAp48, RBBP7/RbAp46, SAP30 and ING2. Sumoylation enhances its association with SIN3A and is required for binding to some target gene promoters, this is the case for TMEM71.

It is found in the nucleus. Its function is as follows. Seems to be involved in p53/TP53 activation and p53/TP53-dependent apoptotic pathways, probably by enhancing acetylation of p53/TP53. Component of a mSin3A-like corepressor complex, which is probably involved in deacetylation of nucleosomal histones. ING2 activity seems to be modulated by binding to phosphoinositides (PtdInsPs). This is Inhibitor of growth protein 2 (Ing2) from Mus musculus (Mouse).